A 6359-amino-acid polypeptide reads, in one-letter code: Bacitracin synthase 3 (6359 aa).

Residues 461 to 1034 (LHELFEEQAM…IKGLGEYIRS (574 aa)) are domain 1 (isoleucine-activating). Positions 941 to 953 (VDRKALPEPDRTA) are enriched in basic and acidic residues. Positions 941 to 962 (VDRKALPEPDRTAGAENEYEAP) are disordered. 5 Carrier domains span residues 961-1036 (APRN…RSTK), 1993-2067 (APRN…KKQS), 3497-3572 (APRN…ESMK), 4539-4613 (PPRN…KAES), and 6047-6122 (PPRH…KHAQ). O-(pantetheine 4'-phosphoryl)serine occurs at positions 996, 2028, and 3532. Residues 1517–2064 (FEDQTLTYRQ…RIKDLAKYVK (548 aa)) form a domain 2 (D-phenylalanine-activating) region. The domain 3 (histidine-activating) stretch occupies residues 2999 to 3570 (NKTIHQLFEE…IKDIGDFIES (572 aa)). The segment at 4047 to 4612 (EQTAVVYADE…KSLSRYVKAE (566 aa)) is domain 4 (D-aspartic acid-activating). Residues 4521-4544 (IDTAALPEPQPGKETEYEPPRNET) are disordered. A compositionally biased stretch (basic and acidic residues) spans 4531 to 4544 (PGKETEYEPPRNET). Ser-4574 and Ser-6082 each carry O-(pantetheine 4'-phosphoryl)serine. Residues 5549–6129 (IHRLFEEQAE…HAQDLLKDYT (581 aa)) form a domain 5 (asparagine-activating) region.

This sequence belongs to the ATP-dependent AMP-binding enzyme family. In terms of assembly, large multienzyme complex of BA1, BA2 and BA3. Pantetheine 4'-phosphate serves as cofactor.

The enzyme catalyses L-aspartate = D-aspartate. It carries out the reaction L-phenylalanine + ATP + H2O = D-phenylalanine + AMP + diphosphate + H(+). The protein operates within antibiotic biosynthesis; bacitracin biosynthesis. In terms of biological role, induces peptide synthesis, activates and incorporates five amino acids, forms a thiazoline ring between the first two amino acids and incorporates a D-glutamine in the fourth position. This is Bacitracin synthase 3 (bacC) from Bacillus licheniformis.